The sequence spans 500 residues: Prostacyclin synthase (500 aa).

Residues 1–20 (MSWAVVFGLLAALLLLLLLT) traverse the membrane as a helical segment. Substrate contacts are provided by residues Arg106, Leu112, Asn287, 358 to 359 (TR), and Arg382. Cys441 serves as a coordination point for heme.

Belongs to the cytochrome P450 family. Heme serves as cofactor.

It localises to the endoplasmic reticulum membrane. It catalyses the reaction prostaglandin H2 = prostaglandin I2. The enzyme catalyses a hydroperoxyeicosatetraenoate = an oxoeicosatetraenoate + H2O. The catalysed reaction is (15S)-hydroperoxy-(5Z,8Z,11Z,13E)-eicosatetraenoate = 15-oxo-(5Z,8Z,11Z,13E)-eicosatetraenoate + H2O. It carries out the reaction (15S)-hydroperoxy-(5Z,8Z,11Z,13E)-eicosatetraenoate + AH2 = (15S)-hydroxy-(5Z,8Z,11Z,13E)-eicosatetraenoate + A + H2O. Catalyzes the biosynthesis and metabolism of eicosanoids. Catalyzes the isomerization of prostaglandin H2 to prostacyclin (= prostaglandin I2), a potent mediator of vasodilation and inhibitor of platelet aggregation. Additionally, displays dehydratase activity, toward hydroperoxyeicosatetraenoates (HPETEs), especially toward (15S)-hydroperoxy-(5Z,8Z,11Z,13E)-eicosatetraenoate (15(S)-HPETE). In Bos taurus (Bovine), this protein is Prostacyclin synthase (PTGIS).